Consider the following 539-residue polypeptide: Phosphatidylinositol 4-phosphate 5-kinase type-1 beta (539 aa).

The tract at residues 1-21 (MSSTAENGDAVPGKQNEEKTY) is disordered. The region spanning 25 to 395 (ASSAIKGAIQ…RFLKFMNSRV (371 aa)) is the PIPK domain. S445, S447, and S448 each carry phosphoserine.

In terms of assembly, interacts with RAC1, AJUBA, PLD1, PLD2 and ARF1.

The protein localises to the cytoplasm. It is found in the cytosol. The protein resides in the cell membrane. It localises to the endomembrane system. The catalysed reaction is a 1,2-diacyl-sn-glycero-3-phospho-(1D-myo-inositol 4-phosphate) + ATP = a 1,2-diacyl-sn-glycero-3-phospho-(1D-myo-inositol-4,5-bisphosphate) + ADP + H(+). The enzyme catalyses 1-octadecanoyl-2-(5Z,8Z,11Z,14Z)-eicosatetraenoyl-sn-glycero-3-phospho-1D-myo-inositol 4-phosphate + ATP = 1-octadecanoyl-2-(5Z,8Z,11Z,14Z)-eicosatetraenoyl-sn-glycero-3-phospho-1D-myo-inositol 4,5-bisphosphate + ADP + H(+). It carries out the reaction 1-octadecanoyl-2-(9Z)-octadecenoyl-sn-glycero-3-phospho-1D-myo-inositol 4-phosphate + ATP = 1-octadecanoyl-2-(9Z)-octadecenoyl-sn-glycero-3-phospho-1D-myo-inositol 4,5-bisphosphate + ADP + H(+). It catalyses the reaction 1-octadecanoyl-2-(9Z)-octadecenoyl-sn-glycero-3-phospho-1D-myo-inositol + ATP = 1-octadecanoyl-2-(9Z)-octadecenoyl-sn-glycero-3-phospho-1D-myo-inositol 5-phosphate + ADP + H(+). The catalysed reaction is 1-octadecanoyl-2-(9Z,12Z)-octadecadienoyl-sn-glycero-3-phospho-1D-myo-inositol + ATP = 1-octadecanoyl-2-(9Z,12Z)-octadecadienoyl-sn-glycero-3-phospho-1D-myo-inositol 5-phosphate + ADP + H(+). The enzyme catalyses 1-octadecanoyl-2-(5Z,8Z,11Z,14Z-eicosatetraenoyl)-sn-glycero-3-phospho-(1D-myo-inositol) + ATP = 1-octadecanoyl-2-(5Z,8Z,11Z,14Z)-eicosatetraenoyl-sn-glycero-3-phospho-1D-myo-inositol 5-phosphate + ADP + H(+). It carries out the reaction 1,2-di-(9Z,12Z)-octadecadienoyl-sn-glycero-3-phospho-1D-myo-inositol + ATP = 1,2-di(9Z,12Z)-octadecadienoyl-sn-glycero-3-phospho-1D-myo-inositol 5-phosphate + ADP + H(+). Functionally, catalyzes the phosphorylation of phosphatidylinositol 4-phosphate (PtdIns(4)P/PI4P) to form phosphatidylinositol 4,5-bisphosphate (PtdIns(4,5)P2/PIP2), a lipid second messenger that regulates several cellular processes such as signal transduction, vesicle trafficking, actin cytoskeleton dynamics, cell adhesion, and cell motility. PtdIns(4,5)P2 can directly act as a second messenger or can be utilized as a precursor to generate other second messengers: inositol 1,4,5-trisphosphate (IP3), diacylglycerol (DAG) or phosphatidylinositol-3,4,5-trisphosphate (PtdIns(3,4,5)P3/PIP3). Mediates RAC1-dependent reorganization of actin filaments. Contributes to the activation of phospholipase PLD2. Together with PIP5K1A, is required, after stimulation by G-protein coupled receptors, for the synthesis of IP3 that will induce stable platelet adhesion. The sequence is that of Phosphatidylinositol 4-phosphate 5-kinase type-1 beta from Rattus norvegicus (Rat).